The chain runs to 570 residues: Probable glucomannan 4-beta-mannosyltransferase 11 (570 aa).

The helical transmembrane segment at 57-77 (LAMTVMILAEKLFVAAVCLAV) threads the bilayer. The active site involves D157. Substrate contacts are provided by D216 and D218. Residue D310 is part of the active site. The next 4 membrane-spanning stretches (helical) occupy residues 389-409 (IAAHTVTFIYYCFVIPVSVWL), 412-432 (IEIPLWGVVYVPTVITLCKAV), 522-542 (YSEIFVGICIILSGFYDVLYA), and 548-568 (IFLFIQGLAFLIVGFDYIGVC).

The protein belongs to the glycosyltransferase 2 family. Plant cellulose synthase-like A subfamily.

It is found in the golgi apparatus membrane. The enzyme catalyses GDP-mannose + (glucomannan)n = GDP + (glucomannan)n+1.. Functionally, probable mannan synthase which consists of a 4-beta-mannosyltransferase activity on mannan using GDP-mannose. The beta-1,4-mannan product is the backbone for galactomannan synthesis by galactomannan galactosyltransferase. Galactomannan is a noncellulosic polysaccharides of plant cell wall. The protein is Probable glucomannan 4-beta-mannosyltransferase 11 of Oryza sativa subsp. japonica (Rice).